The primary structure comprises 425 residues: Histidine--tRNA ligase (425 aa).

It belongs to the class-II aminoacyl-tRNA synthetase family. Homodimer.

Its subcellular location is the cytoplasm. The catalysed reaction is tRNA(His) + L-histidine + ATP = L-histidyl-tRNA(His) + AMP + diphosphate + H(+). The chain is Histidine--tRNA ligase from Listeria innocua serovar 6a (strain ATCC BAA-680 / CLIP 11262).